The sequence spans 248 residues: Adenosylcobinamide-GDP ribazoletransferase (248 aa).

Helical transmembrane passes span 30–50, 54–74, 112–132, 134–154, and 188–208; these read LAES…CYAL, VLSG…LTAV, FGAL…DAVI, AGSF…MVLA, and AVSA…LAAG.

Belongs to the CobS family. It depends on Mg(2+) as a cofactor.

Its subcellular location is the cell inner membrane. The catalysed reaction is alpha-ribazole + adenosylcob(III)inamide-GDP = adenosylcob(III)alamin + GMP + H(+). It catalyses the reaction alpha-ribazole 5'-phosphate + adenosylcob(III)inamide-GDP = adenosylcob(III)alamin 5'-phosphate + GMP + H(+). The protein operates within cofactor biosynthesis; adenosylcobalamin biosynthesis; adenosylcobalamin from cob(II)yrinate a,c-diamide: step 7/7. Joins adenosylcobinamide-GDP and alpha-ribazole to generate adenosylcobalamin (Ado-cobalamin). Also synthesizes adenosylcobalamin 5'-phosphate from adenosylcobinamide-GDP and alpha-ribazole 5'-phosphate. In Syntrophobacter fumaroxidans (strain DSM 10017 / MPOB), this protein is Adenosylcobinamide-GDP ribazoletransferase.